Here is a 179-residue protein sequence, read N- to C-terminus: Large ribosomal subunit protein bL17 (179 aa).

Residues 127-179 (TDTLPDTVIDTGPDSAPDPVPGSEPGSAAGDLPDADTAPADPGESSSNQRVIR) are disordered. Residues 154 to 168 (AAGDLPDADTAPADP) show a composition bias toward low complexity. Positions 170–179 (ESSSNQRVIR) are enriched in polar residues.

This sequence belongs to the bacterial ribosomal protein bL17 family. In terms of assembly, part of the 50S ribosomal subunit. Contacts protein L32.

This Tropheryma whipplei (strain TW08/27) (Whipple's bacillus) protein is Large ribosomal subunit protein bL17.